Consider the following 475-residue polypeptide: Sulfate adenylyltransferase subunit 1 (475 aa).

Residues 25 to 239 (KSLLRFLTCG…EVLETVEIQR (215 aa)) form the tr-type G domain. A G1 region spans residues 34 to 41 (GSVDDGKS). Residue 34–41 (GSVDDGKS) coordinates GTP. The tract at residues 92-96 (GITID) is G2. The G3 stretch occupies residues 113 to 116 (DTPG). Residues 113–117 (DTPGH) and 168–171 (NKMD) contribute to the GTP site. Residues 168–171 (NKMD) are G4. A G5 region spans residues 206–208 (SAL).

This sequence belongs to the TRAFAC class translation factor GTPase superfamily. Classic translation factor GTPase family. CysN/NodQ subfamily. As to quaternary structure, heterodimer composed of CysD, the smaller subunit, and CysN.

The enzyme catalyses sulfate + ATP + H(+) = adenosine 5'-phosphosulfate + diphosphate. Its pathway is sulfur metabolism; hydrogen sulfide biosynthesis; sulfite from sulfate: step 1/3. With CysD forms the ATP sulfurylase (ATPS) that catalyzes the adenylation of sulfate producing adenosine 5'-phosphosulfate (APS) and diphosphate, the first enzymatic step in sulfur assimilation pathway. APS synthesis involves the formation of a high-energy phosphoric-sulfuric acid anhydride bond driven by GTP hydrolysis by CysN coupled to ATP hydrolysis by CysD. This chain is Sulfate adenylyltransferase subunit 1, found in Shigella dysenteriae serotype 1 (strain Sd197).